The following is a 587-amino-acid chain: MQSTDNDLSQSPPKLSADEQLKAASDQLRGTILRSLADPLTGAVSDSDAKLLKFHGIYQQDDREQRDERRRQKLEPAYQFMIRVRLPGGVCSAAQWLKLDELARAYGGDSLRLTTRQTFQFHWVLKHNLQATLQGLHEVLLDTIAACGDDARGVMCTADPRLSALHAAVYDIARQASDHAIPRMRAYHEIWWGEQRVASSDAGPEEPFYGQTYLPRKFKIGFVIPPVNDIDVYAQDLGFIAIAGDDGALQGFNVAIGGGMGRTDQAPATYPRLADVIGFVPPEAVIATCDAVMGVQRDYGNRKDRARARFKYTIDEHGLDAVKAEIERRLGFALQPARPFRFDSNGDALGWQTGEDGRHHVTLFIQNGRLVNLPGLPLLEGLREIARVHTGSFRITPNQNVVIADIGDAERPRIEALLRQYQLEAGPSTSALRLNSMACVALPTCGLAMAESERYLPELVGKIEALLRTHGLEREPITIRMSGCPNGCSRPYIAEIGLTGRAPGKYNLYLGGGFHGQRLNRMVLENAAEAAILALLDTTLAHYARDRHEGEHFGDFAVRAGYVEAVTAGRDFNQRRAPGAGATAPHA.

Positions 1–13 are enriched in polar residues; sequence MQSTDNDLSQSPP. The disordered stretch occupies residues 1 to 20; that stretch reads MQSTDNDLSQSPPKLSADEQ. The [4Fe-4S] cluster site is built by C439, C445, C484, and C488. C488 is a binding site for siroheme.

The protein belongs to the nitrite and sulfite reductase 4Fe-4S domain family. As to quaternary structure, alpha(8)-beta(8). The alpha component is a flavoprotein, the beta component is a hemoprotein. Requires siroheme as cofactor. The cofactor is [4Fe-4S] cluster.

The catalysed reaction is hydrogen sulfide + 3 NADP(+) + 3 H2O = sulfite + 3 NADPH + 4 H(+). It participates in sulfur metabolism; hydrogen sulfide biosynthesis; hydrogen sulfide from sulfite (NADPH route): step 1/1. Its function is as follows. Component of the sulfite reductase complex that catalyzes the 6-electron reduction of sulfite to sulfide. This is one of several activities required for the biosynthesis of L-cysteine from sulfate. This is Sulfite reductase [NADPH] hemoprotein beta-component from Bordetella petrii (strain ATCC BAA-461 / DSM 12804 / CCUG 43448).